The primary structure comprises 346 residues: STE20-related kinase adapter protein stlk (346 aa).

Residues 10–298 (YKLLEILKNG…ASKLMTHSFL (289 aa)) enclose the Protein kinase domain. Residues 16-24 (LKNGMIGTV) and Lys38 each bind ATP.

The protein belongs to the protein kinase superfamily. STE Ser/Thr protein kinase family. STE20 subfamily.

This chain is STE20-related kinase adapter protein stlk, found in Drosophila melanogaster (Fruit fly).